The primary structure comprises 567 residues: uncharacterized protein (567 aa).

12 consecutive transmembrane segments (helical) span residues L136–A156, F159–I179, L193–F213, L217–V237, I258–G278, L291–E311, F334–V354, L364–M384, L393–I415, P426–F446, T457–I477, and A536–L553.

Belongs to the major facilitator superfamily.

It is found in the membrane. This is an uncharacterized protein from Schizosaccharomyces pombe (strain 972 / ATCC 24843) (Fission yeast).